A 163-amino-acid chain; its full sequence is Nucleotide-binding protein CYA_0935 (163 aa).

This sequence belongs to the YajQ family.

Functionally, nucleotide-binding protein. The chain is Nucleotide-binding protein CYA_0935 from Synechococcus sp. (strain JA-3-3Ab) (Cyanobacteria bacterium Yellowstone A-Prime).